Reading from the N-terminus, the 202-residue chain is Pyridoxal 5'-phosphate synthase subunit PdxT (202 aa).

Gly49–Ser51 contributes to the L-glutamine binding site. The active-site Nucleophile is the Cys81. L-glutamine contacts are provided by residues Arg110 and Ile139–Arg140. Catalysis depends on charge relay system residues His182 and Glu184.

It belongs to the glutaminase PdxT/SNO family. As to quaternary structure, in the presence of PdxS, forms a dodecamer of heterodimers. Only shows activity in the heterodimer.

The enzyme catalyses aldehydo-D-ribose 5-phosphate + D-glyceraldehyde 3-phosphate + L-glutamine = pyridoxal 5'-phosphate + L-glutamate + phosphate + 3 H2O + H(+). It carries out the reaction L-glutamine + H2O = L-glutamate + NH4(+). It functions in the pathway cofactor biosynthesis; pyridoxal 5'-phosphate biosynthesis. Functionally, catalyzes the hydrolysis of glutamine to glutamate and ammonia as part of the biosynthesis of pyridoxal 5'-phosphate. The resulting ammonia molecule is channeled to the active site of PdxS. The chain is Pyridoxal 5'-phosphate synthase subunit PdxT from Rhodococcus jostii (strain RHA1).